Here is a 93-residue protein sequence, read N- to C-terminus: UPF0297 protein PEPE_1262 (93 aa).

It belongs to the UPF0297 family.

This is UPF0297 protein PEPE_1262 from Pediococcus pentosaceus (strain ATCC 25745 / CCUG 21536 / LMG 10740 / 183-1w).